Consider the following 232-residue polypeptide: Aliphatic sulfonates import ATP-binding protein SsuB 2 (232 aa).

The ABC transporter domain maps to 1-216; sequence MDIRVDRKAF…PRDRRDPLLA (216 aa). 33-40 is an ATP binding site; that stretch reads GPSGCGKS.

Belongs to the ABC transporter superfamily. Aliphatic sulfonates importer (TC 3.A.1.17.2) family. The complex is composed of two ATP-binding proteins (SsuB), two transmembrane proteins (SsuC) and a solute-binding protein (SsuA).

The protein localises to the cell inner membrane. It catalyses the reaction ATP + H2O + aliphatic sulfonate-[sulfonate-binding protein]Side 1 = ADP + phosphate + aliphatic sulfonateSide 2 + [sulfonate-binding protein]Side 1.. Its function is as follows. Part of the ABC transporter complex SsuABC involved in aliphatic sulfonates import. Responsible for energy coupling to the transport system. The protein is Aliphatic sulfonates import ATP-binding protein SsuB 2 of Pseudomonas syringae pv. tomato (strain ATCC BAA-871 / DC3000).